Here is a 26-residue protein sequence, read N- to C-terminus: Stage V sporulation protein M (26 aa).

The important for localization stretch occupies residues 3–9; sequence FYTIKLP.

Interacts with SpoIVA. May interact with the ATP-dependent protease FtsH.

It localises to the forespore outer membrane. Its function is as follows. Coordinates cortex and coat assembly during sporulation. Associates with the spore coat protein SpoIVA and with the outer forespore membrane, thereby serving as a membrane anchor that tethers SpoIVA and the entire spore coat to the forespore surface. May also serve as a competitive inhibitor of FtsH activity during sporulation. The chain is Stage V sporulation protein M from Bacillus subtilis (strain 168).